Consider the following 392-residue polypeptide: Phospho-N-acetylmuramoyl-pentapeptide-transferase (392 aa).

The next 10 helical transmembrane spans lie at 28 to 48 (RALMAALTALVVGLVAGPYVI), 74 to 94 (TPTMGGVLVLFAIAFATLMWF), 100 to 120 (FVWIVLWVTLGFGAIGWVDDW), 137 to 157 (YFWQSVVGLIAGFYLLFSISE), 193 to 213 (VSYPLGGIGFVILTYLVIVGA), 225 to 245 (GLAIMPVVMVGSALGVFAYVT), 262 to 282 (SGELLVFCSAMAGAGLAFLWF), 289 to 309 (VFMGDVGALALGGALGTIAVI), 314 to 334 (IVFFIMGGIFVVEAISVMAQV), and 369 to 389 (QVVVRFWIITMLLCLIGLSTL).

Belongs to the glycosyltransferase 4 family. MraY subfamily. Mg(2+) serves as cofactor.

The protein resides in the cell inner membrane. The enzyme catalyses UDP-N-acetyl-alpha-D-muramoyl-L-alanyl-gamma-D-glutamyl-meso-2,6-diaminopimeloyl-D-alanyl-D-alanine + di-trans,octa-cis-undecaprenyl phosphate = di-trans,octa-cis-undecaprenyl diphospho-N-acetyl-alpha-D-muramoyl-L-alanyl-D-glutamyl-meso-2,6-diaminopimeloyl-D-alanyl-D-alanine + UMP. The protein operates within cell wall biogenesis; peptidoglycan biosynthesis. Its function is as follows. Catalyzes the initial step of the lipid cycle reactions in the biosynthesis of the cell wall peptidoglycan: transfers peptidoglycan precursor phospho-MurNAc-pentapeptide from UDP-MurNAc-pentapeptide onto the lipid carrier undecaprenyl phosphate, yielding undecaprenyl-pyrophosphoryl-MurNAc-pentapeptide, known as lipid I. In Variovorax paradoxus (strain S110), this protein is Phospho-N-acetylmuramoyl-pentapeptide-transferase.